The chain runs to 147 residues: Large ribosomal subunit protein bL9 (147 aa).

Belongs to the bacterial ribosomal protein bL9 family.

In terms of biological role, binds to the 23S rRNA. The sequence is that of Large ribosomal subunit protein bL9 from Campylobacter fetus subsp. fetus (strain 82-40).